Here is a 168-residue protein sequence, read N- to C-terminus: uncharacterized protein (168 aa).

The or 19 signal peptide spans 1–21 (MKLLKALAVLSLATISSHSFA).

This is an uncharacterized protein from Haemophilus influenzae (strain ATCC 51907 / DSM 11121 / KW20 / Rd).